A 64-amino-acid chain; its full sequence is Ferredoxin-2 (64 aa).

4Fe-4S ferredoxin-type domains lie at 3–31 (KYLY…MSSA) and 34–64 (YAEV…WREE). [4Fe-4S] cluster contacts are provided by C12, C15, C18, and C54.

As to quaternary structure, homodimer. [4Fe-4S] cluster is required as a cofactor.

Ferredoxins are iron-sulfur proteins that transfer electrons in a wide variety of metabolic reactions. This is Ferredoxin-2 from Nitratidesulfovibrio vulgaris (strain DSM 19637 / Miyazaki F) (Desulfovibrio vulgaris).